The primary structure comprises 327 residues: MLGFITRPPHRFLSLLCPGLRIPQLSVLCAQPRPRAMAISSSSCELPLVAVCQVTSTPDKQQNFKTCAELVREAARLGACLAFLPEAFDFIARDPAETLHLSEPLGGKLLEEYTQLARECGLWLSLGGFHERGQDWEQTQKIYNCHVLLNSKGAVVATYRKTHLCDVEIPGQGPMCESNSTMPGPSLESPVSTPAGKIGLAVCYDMRFPELSLALAQAGAEILTYPSAFGSITGPAHWEVLLRARAIETQCYVVAAAQCGRHHEKRASYGHSMVVDPWGTVVARCSEGPGLCLARIDLNYLRQLRRHLPVFQHRRPDLYGNLGHPLS.

The transit peptide at methionine 1–leucine 13 directs the protein to the mitochondrion. The region spanning leucine 46 to leucine 298 is the CN hydrolase domain. Glutamate 86 (proton acceptor) is an active-site residue. Lysine 161 acts as the Proton donor in catalysis. Cysteine 203 acts as the Nucleophile in catalysis.

This sequence belongs to the carbon-nitrogen hydrolase superfamily. NIT1/NIT2 family. As to expression, detected in heart, brain, placenta, liver, skeletal muscle, kidney and pancreas.

It localises to the mitochondrion. Its subcellular location is the cytoplasm. The enzyme catalyses N-(4-oxoglutaryl)-L-cysteinylglycine + H2O = L-cysteinylglycine + 2-oxoglutarate. Functionally, catalyzes the hydrolysis of the amide bond in N-(4-oxoglutarate)-L-cysteinylglycine (deaminated glutathione), a metabolite repair reaction to dispose of the harmful deaminated glutathione. Plays a role in cell growth and apoptosis: loss of expression promotes cell growth, resistance to DNA damage stress and increased incidence to NMBA-induced tumors. Has tumor suppressor properties that enhances the apoptotic responsiveness in cancer cells; this effect is additive to the tumor suppressor activity of FHIT. It is also a negative regulator of primary T-cells. In Homo sapiens (Human), this protein is Deaminated glutathione amidase (NIT1).